A 425-amino-acid chain; its full sequence is MSTVVIIGAQWGDEGKGKIVDFLTEKCDYVVRFQGGCNAGHTVVVGEEKYILHLIPSGILHKNKKCIIGNGVVLDPSGLLKEIETLTQKGVEIDNNLYIAKHCHLIMPYHVAIEEQSEKKKKIGTTKKGIGPCYTDKIARNGVRMIDLLYPDVLKNKIRANLEIINFLLKNLYNAETLDETEILTQYLNYAEKLKKYIADADILINKAIDSGKKVLFEGAQGTLLDIDHGTYPYVTSSNTIAGGACTGAGVSPRKIDNIIGIVKAYTTRVGEGPFPTEIKDSLGEEIRKRGGEYGATTGRPRRCGWLDLVGLRHAVRVNGFTGLAITKLDILDGIEKLKVCVGYKYGNSILEDFPKEIQILEDCMPVYEEFQGWKESTAGIKNYEKLPDNAKKYLKFIEDSLKVKIQIISTGQKRDEIIIKESPL.

Residues 12–18 (GDEGKGK) and 40–42 (GHT) each bind GTP. Catalysis depends on Asp13, which acts as the Proton acceptor. Residues Asp13 and Gly40 each coordinate Mg(2+). Residues 13–16 (DEGK), 38–41 (NAGH), Thr126, Arg140, Gln221, Thr236, and Arg300 contribute to the IMP site. His41 acts as the Proton donor in catalysis. A substrate-binding site is contributed by 296–302 (ATTGRPR). Residues Arg302, 328–330 (KLD), and 410–412 (STG) each bind GTP.

This sequence belongs to the adenylosuccinate synthetase family. As to quaternary structure, homodimer. Mg(2+) is required as a cofactor.

The protein localises to the cytoplasm. It catalyses the reaction IMP + L-aspartate + GTP = N(6)-(1,2-dicarboxyethyl)-AMP + GDP + phosphate + 2 H(+). It functions in the pathway purine metabolism; AMP biosynthesis via de novo pathway; AMP from IMP: step 1/2. Plays an important role in the de novo pathway of purine nucleotide biosynthesis. Catalyzes the first committed step in the biosynthesis of AMP from IMP. The chain is Adenylosuccinate synthetase from Thermodesulfovibrio yellowstonii (strain ATCC 51303 / DSM 11347 / YP87).